The chain runs to 503 residues: MEEFQGYFELDRXRQHDFLYPLLFREYIYALAHDHGLNRSILFKNAGYDKKSSSIVVKRLITRMYQQNPLIFSANDSIQNPFFGHNKNLYSQIISEGFAVIVEIPFSLRLVSSLERKEIAKSHNLRSIHSIFPFLEDKFSHLDYVSDVLIPYHIHLEILVQTLRYWVKDASSLHLLRFFLHEYWNSLITPKKHIILFSKGNPRLFLFLYNSHICEYESIFLFLRNQSSHLRSTSSGIFFERIYFYVKIEHFAKVFFDNDFQCILWFFKDPFMHYVRYQGKSILASKDTPLLMNKWKYYLVTLWQYHFYAWFQPGRIDINQLCKYSLDFLGYRSSVRLNSSVVRSQMLENSFLINNAMKKFETIVPIIPLIGSLSKANFCNTLGHPISKPTRADSSDSDIIDRFLRICRNLSHYHSGSSKKKSLYRVKYILRLSCVKTLARKHKRTVRTFFKRLGSEFLEXFLTEEEVVLSLIFPRTYSTSRRLYRGQIWYLDITSINDLVNYE.

The protein belongs to the intron maturase 2 family. MatK subfamily.

The protein resides in the plastid. It localises to the chloroplast. Usually encoded in the trnK tRNA gene intron. Probably assists in splicing its own and other chloroplast group II introns. The chain is Maturase K from Syzygium australe (Brush cherry).